Reading from the N-terminus, the 269-residue chain is Adenosylcobinamide-GDP ribazoletransferase (269 aa).

A run of 5 helical transmembrane segments spans residues 8-28 (QFNLILLAVSFFTRLPVPTAI), 41-61 (YFPLVGWLLAALLSAFYCFML), 70-90 (VCLLIIFSLMLTGAIHEDGLA), 114-136 (IGTYGTCALICALLSKFILLSSL), and 196-216 (VPAVLWLPLSSAILVIVSACV).

Belongs to the CobS family. Mg(2+) serves as cofactor.

It localises to the cell inner membrane. It catalyses the reaction alpha-ribazole + adenosylcob(III)inamide-GDP = adenosylcob(III)alamin + GMP + H(+). The catalysed reaction is alpha-ribazole 5'-phosphate + adenosylcob(III)inamide-GDP = adenosylcob(III)alamin 5'-phosphate + GMP + H(+). It participates in cofactor biosynthesis; adenosylcobalamin biosynthesis; adenosylcobalamin from cob(II)yrinate a,c-diamide: step 7/7. Functionally, joins adenosylcobinamide-GDP and alpha-ribazole to generate adenosylcobalamin (Ado-cobalamin). Also synthesizes adenosylcobalamin 5'-phosphate from adenosylcobinamide-GDP and alpha-ribazole 5'-phosphate. The sequence is that of Adenosylcobinamide-GDP ribazoletransferase from Pseudoalteromonas atlantica (strain T6c / ATCC BAA-1087).